Here is a 390-residue protein sequence, read N- to C-terminus: Magnesium-protoporphyrin IX monomethyl ester [oxidative] cyclase (390 aa).

This sequence belongs to the AcsF family. Fe cation is required as a cofactor.

The enzyme catalyses Mg-protoporphyrin IX 13-monomethyl ester + 3 NADPH + 3 O2 + 2 H(+) = 3,8-divinyl protochlorophyllide a + 3 NADP(+) + 5 H2O. It functions in the pathway porphyrin-containing compound metabolism; chlorophyll biosynthesis (light-independent). Catalyzes the formation of the isocyclic ring in chlorophyll biosynthesis. Mediates the cyclase reaction, which results in the formation of divinylprotochlorophyllide (Pchlide) characteristic of all chlorophylls from magnesium-protoporphyrin IX 13-monomethyl ester (MgPMME). The protein is Magnesium-protoporphyrin IX monomethyl ester [oxidative] cyclase of Prochlorococcus marinus subsp. pastoris (strain CCMP1986 / NIES-2087 / MED4).